A 329-amino-acid polypeptide reads, in one-letter code: Very long chain fatty acid elongase 7 (329 aa).

7 helical membrane-spanning segments follow: residues Tyr-26–Val-46, Leu-66–Ile-86, Gly-114–Met-134, Val-146–Gly-166, Phe-170–Ala-190, Leu-205–Phe-225, and Ile-233–Phe-253.

This sequence belongs to the ELO family.

The protein resides in the membrane. The enzyme catalyses a very-long-chain acyl-CoA + malonyl-CoA + H(+) = a very-long-chain 3-oxoacyl-CoA + CO2 + CoA. Its function is as follows. Catalyzes the first and rate-limiting reaction of the four reactions that constitute the long-chain fatty acids elongation cycle. This endoplasmic reticulum-bound enzymatic process allows the addition of 2 carbons to the chain of long- and very long-chain fatty acids (VLCFAs) per cycle. This Drosophila melanogaster (Fruit fly) protein is Very long chain fatty acid elongase 7.